A 213-amino-acid polypeptide reads, in one-letter code: Histone H1.3 (213 aa).

Ser1 carries the post-translational modification N-acetylserine. The span at 1–15 (SEAPAETAAPAPAEK) shows a compositional bias: low complexity. Positions 1–41 (SEAPAETAAPAPAEKSPAKKKKAAKKPGAGAAKRKAAGPPV) are disordered. Position 15 is an N6-acetyllysine (Lys15). Lys35 and Lys53 each carry N6-(beta-hydroxybutyryl)lysine. The H15 domain occupies 37–110 (AGPPVSELIT…GASGSFKLDK (74 aa)). Arg55 is subject to Citrulline. An N6-(beta-hydroxybutyryl)lysine mark is found at Lys65, Lys86, and Lys91. Residues 92–213 (GTLVETKGTG…AKKTAAKKKK (122 aa)) form a disordered region. Position 105 is a phosphoserine (Ser105). N6-(beta-hydroxybutyryl)lysine is present on Lys107. Positions 107-119 (KLDKKAASGEAKP) are enriched in basic and acidic residues. Basic residues-rich tracts occupy residues 120-131 (KPKKAGAAKPKK), 138-170 (KKPK…KVAK), and 179-213 (KSPK…KKKK).

It belongs to the histone H1/H5 family. Post-translationally, H1 histones are progressively phosphorylated during the cell cycle, becoming maximally phosphorylated during late G2 phase and M phase, and being dephosphorylated sharply thereafter. In terms of processing, citrullination at Arg-55 (H1R54ci) by PADI4 takes place within the DNA-binding site of H1 and results in its displacement from chromatin and global chromatin decondensation, thereby promoting pluripotency and stem cell maintenance.

The protein resides in the nucleus. The protein localises to the chromosome. Functionally, histones H1 are necessary for the condensation of nucleosome chains into higher-order structures. The sequence is that of Histone H1.3 from Oryctolagus cuniculus (Rabbit).